We begin with the raw amino-acid sequence, 161 residues long: Lipid droplet assembly factor 1 (161 aa).

Topologically, residues 1–43 (MAKEEPQSISRDLQELQKKLSLLIDSFQNNSKVVAFMKSPVGQ) are cytoplasmic. The chain crosses the membrane as a helical span at residues 44–61 (YLDSHPFLAFTLLVFIVM). The Lumenal segment spans residues 62–67 (SAVPVG). Residues 68-87 (FFLLIVVLTTLAALLGVIIL) form a helical membrane-spanning segment. Over 88–93 (EGLVIS) the chain is Cytoplasmic. A helical membrane pass occupies residues 94 to 110 (VGGFSLLCILCGLGFVS). The Lumenal segment spans residues 111–116 (LAMSGM). Residues 117 to 133 (MIASYVVVSSLISCWFS) traverse the membrane as a helical segment. Residues 134–161 (PRPLTQQNTSCDFLPAMKSAEFEGLYQE) lie on the Cytoplasmic side of the membrane.

This sequence belongs to the LDAF1 family. Interacts with isoform 1 and isoform 3 of BSCL2/seipin to form an oligomeric complex. In terms of tissue distribution, expressed at high levels in the heart and skeletal muscle. Expressed at low levels in kidney, small intestine, lung and liver.

Its subcellular location is the endoplasmic reticulum membrane. It is found in the lipid droplet. In terms of biological role, plays an important role in the formation of lipid droplets (LD) which are storage organelles at the center of lipid and energy homeostasis. In association with BSCL2/seipin, defines the sites of LD formation in the endoplasmic reticulum. This is Lipid droplet assembly factor 1 from Homo sapiens (Human).